A 357-amino-acid chain; its full sequence is Prostaglandin E2 receptor EP2 subtype (357 aa).

The Extracellular segment spans residues M1 to E24. N-linked (GlcNAc...) asparagine glycosylation occurs at N6. The chain crosses the membrane as a helical span at residues S25–A48. At R49–S66 the chain is on the cytoplasmic side. Residues L67–A92 traverse the membrane as a helical segment. The Extracellular portion of the chain corresponds to S93 to Y112. A disulfide bridge connects residues C110 and C188. The helical transmembrane segment at F113–L133 threads the bilayer. At E134–R152 the chain is on the cytoplasmic side. A helical transmembrane segment spans residues G153–G177. Over E178–Q199 the chain is Extracellular. Residues L200 to I224 traverse the membrane as a helical segment. Residues R225–H262 are Cytoplasmic-facing. Positions C235–P245 are enriched in low complexity. Residues C235–S255 form a disordered region. Residues L263 to M286 traverse the membrane as a helical segment. Residues D287–R299 lie on the Extracellular side of the membrane. The chain crosses the membrane as a helical span at residues A300–L323. The Cytoplasmic portion of the chain corresponds to R324–L357.

Belongs to the G-protein coupled receptor 1 family.

The protein resides in the cell membrane. Functionally, receptor for prostaglandin E2 (PGE2). The activity of this receptor is mediated by G(s) proteins that stimulate adenylate cyclase. The subsequent raise in intracellular cAMP is responsible for the relaxing effect of this receptor on smooth muscle. The chain is Prostaglandin E2 receptor EP2 subtype (Ptger2) from Rattus norvegicus (Rat).